Reading from the N-terminus, the 411-residue chain is Dual-specificity RNA methyltransferase RlmN (411 aa).

The active-site Proton acceptor is E125. The Radical SAM core domain occupies 131–380 (EEGRGTLCIS…IRTPRGRDIL (250 aa)). An intrachain disulfide couples C138 to C383. [4Fe-4S] cluster contacts are provided by C145, C149, and C152. Residues 209–210 (GE), S241, 263–265 (SLH), and N340 each bind S-adenosyl-L-methionine. Residue C383 is the S-methylcysteine intermediate of the active site.

The protein belongs to the radical SAM superfamily. RlmN family. [4Fe-4S] cluster is required as a cofactor.

The protein resides in the cytoplasm. It carries out the reaction adenosine(2503) in 23S rRNA + 2 reduced [2Fe-2S]-[ferredoxin] + 2 S-adenosyl-L-methionine = 2-methyladenosine(2503) in 23S rRNA + 5'-deoxyadenosine + L-methionine + 2 oxidized [2Fe-2S]-[ferredoxin] + S-adenosyl-L-homocysteine. The catalysed reaction is adenosine(37) in tRNA + 2 reduced [2Fe-2S]-[ferredoxin] + 2 S-adenosyl-L-methionine = 2-methyladenosine(37) in tRNA + 5'-deoxyadenosine + L-methionine + 2 oxidized [2Fe-2S]-[ferredoxin] + S-adenosyl-L-homocysteine. Specifically methylates position 2 of adenine 2503 in 23S rRNA and position 2 of adenine 37 in tRNAs. m2A2503 modification seems to play a crucial role in the proofreading step occurring at the peptidyl transferase center and thus would serve to optimize ribosomal fidelity. This Brucella melitensis biotype 2 (strain ATCC 23457) protein is Dual-specificity RNA methyltransferase RlmN.